We begin with the raw amino-acid sequence, 166 residues long: ATP synthase subunit b (166 aa).

Residues 10–30 (LLFWMVIVFGIVFVILAKYGF) form a helical membrane-spanning segment.

Belongs to the ATPase B chain family. In terms of assembly, F-type ATPases have 2 components, F(1) - the catalytic core - and F(0) - the membrane proton channel. F(1) has five subunits: alpha(3), beta(3), gamma(1), delta(1), epsilon(1). F(0) has three main subunits: a(1), b(2) and c(10-14). The alpha and beta chains form an alternating ring which encloses part of the gamma chain. F(1) is attached to F(0) by a central stalk formed by the gamma and epsilon chains, while a peripheral stalk is formed by the delta and b chains.

It localises to the cell inner membrane. F(1)F(0) ATP synthase produces ATP from ADP in the presence of a proton or sodium gradient. F-type ATPases consist of two structural domains, F(1) containing the extramembraneous catalytic core and F(0) containing the membrane proton channel, linked together by a central stalk and a peripheral stalk. During catalysis, ATP synthesis in the catalytic domain of F(1) is coupled via a rotary mechanism of the central stalk subunits to proton translocation. Functionally, component of the F(0) channel, it forms part of the peripheral stalk, linking F(1) to F(0). This is ATP synthase subunit b from Phocaeicola vulgatus (strain ATCC 8482 / DSM 1447 / JCM 5826 / CCUG 4940 / NBRC 14291 / NCTC 11154) (Bacteroides vulgatus).